The sequence spans 253 residues: tRNA pseudouridine synthase A (253 aa).

Catalysis depends on aspartate 53, which acts as the Nucleophile. Tyrosine 112 lines the substrate pocket.

This sequence belongs to the tRNA pseudouridine synthase TruA family. In terms of assembly, homodimer.

It catalyses the reaction uridine(38/39/40) in tRNA = pseudouridine(38/39/40) in tRNA. Its function is as follows. Formation of pseudouridine at positions 38, 39 and 40 in the anticodon stem and loop of transfer RNAs. This Lactococcus lactis subsp. cremoris (strain MG1363) protein is tRNA pseudouridine synthase A.